Consider the following 1054-residue polypeptide: DNA-directed RNA polymerase subunit beta' (1054 aa).

The Mg(2+) site is built by D383, D385, and D387. Positions 752, 826, 833, and 836 each coordinate Zn(2+).

The protein belongs to the RNA polymerase beta' chain family. As to quaternary structure, the RNAP catalytic core consists of 2 alpha, 1 beta, 1 beta' and 1 omega subunit. When a sigma factor is associated with the core the holoenzyme is formed, which can initiate transcription. Requires Mg(2+) as cofactor. Zn(2+) serves as cofactor.

It carries out the reaction RNA(n) + a ribonucleoside 5'-triphosphate = RNA(n+1) + diphosphate. In terms of biological role, DNA-dependent RNA polymerase catalyzes the transcription of DNA into RNA using the four ribonucleoside triphosphates as substrates. The polypeptide is DNA-directed RNA polymerase subunit beta' (Weissella paramesenteroides (Leuconostoc paramesenteroides)).